We begin with the raw amino-acid sequence, 162 residues long: UPF0305 protein MmarC6_0221 (162 aa).

This sequence belongs to the UPF0305 family.

In Methanococcus maripaludis (strain C6 / ATCC BAA-1332), this protein is UPF0305 protein MmarC6_0221.